Here is a 302-residue protein sequence, read N- to C-terminus: 4-hydroxy-tetrahydrodipicolinate synthase (302 aa).

A pyruvate-binding site is contributed by Thr-46. The active-site Proton donor/acceptor is Tyr-134. The active-site Schiff-base intermediate with substrate is the Lys-162. Ile-204 contributes to the pyruvate binding site.

The protein belongs to the DapA family. Homotetramer; dimer of dimers.

The protein resides in the cytoplasm. The enzyme catalyses L-aspartate 4-semialdehyde + pyruvate = (2S,4S)-4-hydroxy-2,3,4,5-tetrahydrodipicolinate + H2O + H(+). It participates in amino-acid biosynthesis; L-lysine biosynthesis via DAP pathway; (S)-tetrahydrodipicolinate from L-aspartate: step 3/4. In terms of biological role, catalyzes the condensation of (S)-aspartate-beta-semialdehyde [(S)-ASA] and pyruvate to 4-hydroxy-tetrahydrodipicolinate (HTPA). This is 4-hydroxy-tetrahydrodipicolinate synthase from Xanthomonas axonopodis pv. citri (strain 306).